Consider the following 144-residue polypeptide: Austinoid biosynthesis clusters protein S (144 aa).

This sequence belongs to the trt14 isomerase family. In terms of assembly, homodimer.

It participates in secondary metabolite biosynthesis; terpenoid biosynthesis. Functionally, part of the gene cluster B that mediates the biosynthesis of the fungal meroterpenoid acetoxydehydroaustin. The first step of the pathway is the synthesis of 3,5-dimethylorsellinic acid by the polyketide synthase ausA. 3,5-dimethylorsellinic acid is then prenylated by the polyprenyl transferase ausN. Further epoxidation by the FAD-dependent monooxygenase ausM and cyclization by the probable terpene cyclase ausL lead to the formation of protoaustinoid A. Protoaustinoid A is then oxidized to spiro-lactone preaustinoid A3 by the combined action of the FAD-binding monooxygenases ausB and ausC, and the dioxygenase ausE. Acid-catalyzed keto-rearrangement and ring contraction of the tetraketide portion of preaustinoid A3 by ausJ lead to the formation of preaustinoid A4. The aldo-keto reductase ausK, with the help of ausH, is involved in the next step by transforming preaustinoid A4 into isoaustinone which is in turn hydroxylated by the P450 monooxygenase ausI to form austinolide. The cytochrome P450 monooxygenase ausG then modifies austinolide to austinol. Austinol is further acetylated to austin by the O-acetyltransferase ausP, which spontaneously changes to dehydroaustin. The cytochrome P450 monooxygenase then converts dehydroaustin is into 7-dehydrodehydroaustin. The hydroxylation catalyzed by ausR permits the second O-acetyltransferase ausQ to add an additional acetyl group to the molecule, leading to the formation of acetoxydehydroaustin. Due to genetic rearrangements of the clusters and the subsequent loss of some enzymes, the end product of the Penicillium brasilianum austinoid biosynthesis clusters is acetoxydehydroaustin. AusS is necessary for austinoids production and may play a possible function as a regulator. The sequence is that of Austinoid biosynthesis clusters protein S from Penicillium brasilianum.